The following is an 88-amino-acid chain: FXYD domain-containing ion transport regulator 3 (88 aa).

An N-terminal signal peptide occupies residues 1–17 (MHEVALSVLILLAGLSA). Residues 18–38 (LDANDPEDKNSPFYYDWHSLR) are Extracellular-facing. Residues 39-59 (VGGLICAGTPCALGIIILLSG) traverse the membrane as a helical segment. The Cytoplasmic portion of the chain corresponds to 60 to 88 (KCKCKFSQKPSHRPGDAPPLITPGSAHDC). The interval 66 to 88 (SQKPSHRPGDAPPLITPGSAHDC) is disordered.

The protein belongs to the FXYD family. In terms of assembly, regulatory subunit of the sodium/potassium-transporting ATPase which is composed of a catalytic alpha subunit, a non-catalytic beta subunit and an additional regulatory subunit. Interacts with catalytic alpha subunit ATP1A1. Also interacts with non-catalytic beta subunit ATP1B1. Interacts with the alpha1-beta1, alpha2-beta1 and alpha3-beta1 NKA isozymes. Post-translationally, glutathionylated.

The protein resides in the cell membrane. Associates with and regulates the activity of the sodium/potassium-transporting ATPase (NKA) which transports Na(+) out of the cell and K(+) into the cell. Reduces glutathionylation of the NKA beta-1 subunit ATP1B1, thus reversing glutathionylation-mediated inhibition of ATP1B1. Induces a hyperpolarization-activated chloride current when expressed in Xenopus oocytes. This Sus scrofa (Pig) protein is FXYD domain-containing ion transport regulator 3 (FXYD3).